The following is a 219-amino-acid chain: Protein YNG1 (219 aa).

The PHD-type; degenerate zinc finger occupies E155–E204. C158, C160, C171, C176, H182, C185, C198, and C202 together coordinate Zn(2+).

The protein belongs to the ING family. Component of the NuA3 histone acetyltransferase (HAT) complex. The NuA3 HAT complex has 2 functionally distinct forms that participate in transcription. The NuA3a HAT complex is composed of at least NTO1, SAS3, TAF14, YNG1 and EAF6. The NuA3b HAT complex contains an additional subunit, PDP3. Interacts with H3K4me3 and to a lesser extent with H3K4me2.

Its subcellular location is the nucleus. In terms of biological role, histone-binding component of the NuA3a histone acetyltransferase complex. Targets the NuA3a HAT complex via histone H3K4me3 to facilitate transcription initiation at promoter regions. SAS3 then acetylates H3K14, leading to transcription initiation at a subset of genes. YNG1 is required for the HAT activity of NuA3 but not for its integrity. Mediates the interaction of SAS3 with nucleosomes. This Saccharomyces cerevisiae (strain ATCC 204508 / S288c) (Baker's yeast) protein is Protein YNG1 (YNG1).